A 382-amino-acid chain; its full sequence is Mannitol-1-phosphate 5-dehydrogenase (382 aa).

3–14 (ALHFGAGNIGRG) lines the NAD(+) pocket.

This sequence belongs to the mannitol dehydrogenase family.

The enzyme catalyses D-mannitol 1-phosphate + NAD(+) = beta-D-fructose 6-phosphate + NADH + H(+). This chain is Mannitol-1-phosphate 5-dehydrogenase, found in Salmonella dublin (strain CT_02021853).